We begin with the raw amino-acid sequence, 128 residues long: Aspartate 1-decarboxylase (128 aa).

Serine 25 (schiff-base intermediate with substrate; via pyruvic acid) is an active-site residue. Serine 25 carries the pyruvic acid (Ser) modification. Residue threonine 57 coordinates substrate. Tyrosine 58 (proton donor) is an active-site residue. Residue 73-75 (GSA) coordinates substrate.

The protein belongs to the PanD family. Heterooctamer of four alpha and four beta subunits. Pyruvate is required as a cofactor. In terms of processing, is synthesized initially as an inactive proenzyme, which is activated by self-cleavage at a specific serine bond to produce a beta-subunit with a hydroxyl group at its C-terminus and an alpha-subunit with a pyruvoyl group at its N-terminus.

The protein resides in the cytoplasm. The enzyme catalyses L-aspartate + H(+) = beta-alanine + CO2. It functions in the pathway cofactor biosynthesis; (R)-pantothenate biosynthesis; beta-alanine from L-aspartate: step 1/1. Functionally, catalyzes the pyruvoyl-dependent decarboxylation of aspartate to produce beta-alanine. This is Aspartate 1-decarboxylase from Burkholderia lata (strain ATCC 17760 / DSM 23089 / LMG 22485 / NCIMB 9086 / R18194 / 383).